Consider the following 122-residue polypeptide: Serum amyloid A-1 protein (122 aa).

Positions 1-19 are cleaved as a signal peptide; that stretch reads MKLLSGLLLCSLVLGVSSQ. The important for amyloid formation stretch occupies residues 20–45; sequence RWFSFIGEATQGAWDMWRAYSDMREA. Positions 87–122 are disordered; that stretch reads MGHGAEDSMADQAANEWGRSGKDPNHFRPKGLPDKY. Residues 105 to 122 show a composition bias toward basic and acidic residues; it reads RSGKDPNHFRPKGLPDKY.

It belongs to the SAA family. Homohexamer; dimer of trimers. Can form amyloid fibrils after partial proteolysis; the native, undenatured protein does not form amyloid fibrils (in vitro). Apolipoprotein of the HDL complex. Binds to heparin. As to expression, detected in liver.

It localises to the secreted. Functionally, major acute phase protein. In Oryctolagus cuniculus (Rabbit), this protein is Serum amyloid A-1 protein (SAA1).